Here is a 326-residue protein sequence, read N- to C-terminus: Tryptophan--tRNA ligase (326 aa).

ATP-binding positions include 11 to 13 (QPT) and 19 to 20 (GN). Residues 12-20 (PTGQIHLGN) carry the 'HIGH' region motif. D135 lines the L-tryptophan pocket. Residues 147 to 149 (GED), V186, and 195 to 199 (KMSKS) contribute to the ATP site. The 'KMSKS' region motif lies at 195–199 (KMSKS).

This sequence belongs to the class-I aminoacyl-tRNA synthetase family. In terms of assembly, homodimer.

Its subcellular location is the cytoplasm. The enzyme catalyses tRNA(Trp) + L-tryptophan + ATP = L-tryptophyl-tRNA(Trp) + AMP + diphosphate + H(+). Catalyzes the attachment of tryptophan to tRNA(Trp). This Helicobacter pylori (strain ATCC 700392 / 26695) (Campylobacter pylori) protein is Tryptophan--tRNA ligase.